The primary structure comprises 280 residues: MIKINSTIECSNSAPFVLFGGINVLESEDLALTACAEYVRVTQKLGIPYVFKASFDKANRSSIHSYRGPGMEEGLRIFEKVKAEFGVPIITDVHEIYQTAPVAEVVDVLQLPAFLARQTDLVVALAKTGKPVNIKKPQFLSPSQMQNIVHKFKEAGNDQLILCDRGTCMGYDNLIVDMLGFGVMKRTCQDLPIIFDVTHALQNRDPSGAASGGRREQVVELARAGMGVGLAGLFLEAHPNPDQAKCDGPSALPLDKLEPFLAQIKALDDLVKSFPQLTIA.

The protein belongs to the KdsA family.

The protein localises to the cytoplasm. The enzyme catalyses D-arabinose 5-phosphate + phosphoenolpyruvate + H2O = 3-deoxy-alpha-D-manno-2-octulosonate-8-phosphate + phosphate. Its pathway is carbohydrate biosynthesis; 3-deoxy-D-manno-octulosonate biosynthesis; 3-deoxy-D-manno-octulosonate from D-ribulose 5-phosphate: step 2/3. The protein operates within bacterial outer membrane biogenesis; lipopolysaccharide biosynthesis. The sequence is that of 2-dehydro-3-deoxyphosphooctonate aldolase 2 (kdsA2) from Pseudomonas putida (strain ATCC 47054 / DSM 6125 / CFBP 8728 / NCIMB 11950 / KT2440).